A 328-amino-acid polypeptide reads, in one-letter code: Beta-ketoacyl-[acyl-carrier-protein] synthase III (328 aa).

Catalysis depends on residues cysteine 122 and histidine 255. Residues glutamine 256–arginine 260 form an ACP-binding region. Asparagine 285 is a catalytic residue.

The protein belongs to the thiolase-like superfamily. FabH family. Homodimer.

The protein resides in the cytoplasm. The catalysed reaction is malonyl-[ACP] + acetyl-CoA + H(+) = 3-oxobutanoyl-[ACP] + CO2 + CoA. It participates in lipid metabolism; fatty acid biosynthesis. Its function is as follows. Catalyzes the condensation reaction of fatty acid synthesis by the addition to an acyl acceptor of two carbons from malonyl-ACP. Catalyzes the first condensation reaction which initiates fatty acid synthesis and may therefore play a role in governing the total rate of fatty acid production. Possesses both acetoacetyl-ACP synthase and acetyl transacylase activities. Its substrate specificity determines the biosynthesis of branched-chain and/or straight-chain of fatty acids. The protein is Beta-ketoacyl-[acyl-carrier-protein] synthase III of Janthinobacterium sp. (strain Marseille) (Minibacterium massiliensis).